Consider the following 657-residue polypeptide: Glycogen debranching enzyme (657 aa).

The Nucleophile role is filled by Asp336. Glu371 functions as the Proton donor in the catalytic mechanism. The disordered stretch occupies residues 460–479 (ANGEENRDGTNNNYSNNHGK).

It belongs to the glycosyl hydrolase 13 family.

The enzyme catalyses Hydrolysis of (1-&gt;6)-alpha-D-glucosidic linkages to branches with degrees of polymerization of three or four glucose residues in limit dextrin.. It functions in the pathway glycan degradation; glycogen degradation. Functionally, removes maltotriose and maltotetraose chains that are attached by 1,6-alpha-linkage to the limit dextrin main chain, generating a debranched limit dextrin. The sequence is that of Glycogen debranching enzyme from Escherichia coli (strain SMS-3-5 / SECEC).